Consider the following 310-residue polypeptide: Probable manganese-dependent inorganic pyrophosphatase (310 aa).

The Mn(2+) site is built by His-10, Asp-14, Asp-16, Asp-75, His-97, and Asp-149.

The protein belongs to the PPase class C family. The cofactor is Mn(2+).

Its subcellular location is the cytoplasm. It carries out the reaction diphosphate + H2O = 2 phosphate + H(+). The chain is Probable manganese-dependent inorganic pyrophosphatase from Clostridium acetobutylicum (strain ATCC 824 / DSM 792 / JCM 1419 / IAM 19013 / LMG 5710 / NBRC 13948 / NRRL B-527 / VKM B-1787 / 2291 / W).